Here is a 455-residue protein sequence, read N- to C-terminus: F-box/LRR-repeat protein At5g35995 (455 aa).

One can recognise an F-box domain in the interval arginine 4–glutamate 51. 5 LRR repeats span residues aspartate 114–threonine 138, phenylalanine 152–glycine 176, isoleucine 282–methionine 305, phenylalanine 308–tryptophan 324, and glutamine 325–lysine 348.

This chain is F-box/LRR-repeat protein At5g35995, found in Arabidopsis thaliana (Mouse-ear cress).